Consider the following 272-residue polypeptide: Soluble interferon gamma receptor OPG193 (272 aa).

Positions 1–13 (MRYIIILAVLFIN) are cleaved as a signal peptide. N-linked (GlcNAc...) asparagine; by host glycans are attached at residues asparagine 42, asparagine 150, and asparagine 267.

The protein belongs to the type II cytokine receptor family. As to quaternary structure, homodimer. Interacts with host IFNG.

Its subcellular location is the secreted. In terms of biological role, counteracts the antiviral effects of host IFN-gamma. Acts as a soluble IFN-gamma receptor and thus inhibits the interaction between host IFN-gamma and its receptor. This Bos taurus (Bovine) protein is Soluble interferon gamma receptor OPG193 (OPG193).